The primary structure comprises 101 residues: Class II hydrophobin 5 (101 aa).

Residues Met-1–Ala-15 form the signal peptide. Disulfide bonds link Cys-33–Cys-83, Cys-44–Cys-74, Cys-45–Cys-57, and Cys-84–Cys-95.

Belongs to the cerato-ulmin hydrophobin family. Homodimer. Homodimers further self-assemble to form highly ordered films at water-air interfaces through intermolecular interactions.

The protein localises to the secreted. The protein resides in the cell wall. Aerial growth, conidiation, and dispersal of filamentous fungi in the environment rely upon a capability of their secreting small amphipathic proteins called hydrophobins (HPBs) with low sequence identity. Class I can self-assemble into an outermost layer of rodlet bundles on aerial cell surfaces, conferring cellular hydrophobicity that supports fungal growth, development and dispersal; whereas Class II form highly ordered films at water-air interfaces through intermolecular interactions but contribute nothing to the rodlet structure. This Trichoderma asperellum (strain ATCC 204424 / CBS 433.97 / NBRC 101777) protein is Class II hydrophobin 5.